We begin with the raw amino-acid sequence, 372 residues long: Protein REVEILLE 7 (372 aa).

The HTH myb-type domain maps to 71 to 125 (TVTKQREKWSEEEHDRFLEAIKLYGRGWRQIQEHIGTKTAVQIRSHAQKFFSKMA). Positions 98–121 (WRQIQEHIGTKTAVQIRSHAQKFF) form a DNA-binding region, H-T-H motif. The tract at residues 124–204 (MAQEADSRSE…RCSSPNSCTS (81 aa)) is disordered. Residues 145–155 (RPKRKPAHPYP) are compositionally biased toward basic residues. The segment covering 156–169 (RKSPVPYTQSPPPN) has biased composition (pro residues). Residues 178–204 (KSPTSVLSSFGSEDQVNRCSSPNSCTS) are compositionally biased toward polar residues.

It is found in the nucleus. In terms of biological role, transcription factor involved in phytochrome A-mediated cotyledon opening. Controlled by the central oscillator mediated by LHY and CCA1. Part of a regulatory circadian feedback loop. Regulates its own expression. This chain is Protein REVEILLE 7 (RVE7), found in Arabidopsis thaliana (Mouse-ear cress).